A 146-amino-acid chain; its full sequence is Hemoglobin subunit beta (146 aa).

A Globin domain is found at 2–146; it reads HWTAEEKQLI…VAHALARKYH (145 aa). Heme b is bound by residues histidine 63 and histidine 92.

It belongs to the globin family. In terms of assembly, heterotetramer of two alpha chains and two beta chains. In terms of tissue distribution, red blood cells.

Functionally, involved in oxygen transport from the lung to the various peripheral tissues. This Branta canadensis (Canada goose) protein is Hemoglobin subunit beta (HBB).